We begin with the raw amino-acid sequence, 2224 residues long: Myomegalin (2224 aa).

4 coiled-coil regions span residues Arg-41–Glu-97, Asp-162–Glu-205, Val-236–Leu-318, and Cys-350–Gln-682. Positions Pro-206–Val-236 are disordered. The span at Pro-219–Val-236 shows a compositional bias: polar residues. Positions Gly-703–Ala-751 are disordered. Thr-705 carries the phosphothreonine modification. Over residues Ser-724 to Ser-738 the composition is skewed to basic and acidic residues. Coiled-coil stretches lie at residues Gly-745–Asp-822, Asn-856–Tyr-886, and Ala-949–Ser-986. Disordered stretches follow at residues Thr-1098–Leu-1128, Asn-1141–Lys-1161, and Val-1270–Ser-1298. Positions Glu-1112 to Gln-1124 are enriched in polar residues. Coiled-coil stretches lie at residues Ser-1159 to Thr-1187, Asp-1295 to Thr-1331, and Gly-1377 to Thr-1401. The span at Lys-1276–Ser-1298 shows a compositional bias: basic and acidic residues. The region spanning Lys-1497–Ser-1588 is the Olduvai domain. Disordered regions lie at residues Thr-1576 to Gln-1637, Ser-1736 to Gly-1757, Leu-1805 to Glu-1824, and Lys-1962 to Pro-2001. Residues Glu-1599 to Thr-1609 show a composition bias toward polar residues. Low complexity predominate over residues Gly-1748 to Gly-1757. The stretch at Gly-1769–Arg-1958 forms a coiled coil. Residues Lys-2148–Phe-2191 adopt a coiled-coil conformation.

Interacts with PDE4D. Isoform 2 interacts with MAPRE1 and MAPRE3. Isoform 2 forms a pericentrosomal complex with AKAP9, CDK5RAP2 and EB1/MAPRE1; within this complex, may mediate MAPRE1-binding to CDK5RAP2. Interaction with AKAP9 stabilizes both proteins. Isoform 2 interacts (via N-terminus) with CAMSAP2; this interaction is much stronger in the presence of AKAP9. In complex with AKAP9, Isoform 2 recruits CAMSAP2 to the Golgi apparatus. Isoform 2 interacts with unglycosylated LGALS3BP; this interaction may connect the pericentrosomal complex to the gamma-tubulin ring complex (gamma-TuRC) to promote microtubule assembly and acetylation.

The protein localises to the cytoplasm. Its subcellular location is the cytoskeleton. It localises to the microtubule organizing center. It is found in the centrosome. The protein resides in the golgi apparatus. Functions as an anchor sequestering components of the cAMP-dependent pathway to Golgi and/or centrosomes. Functionally, participates in microtubule dynamics, promoting microtubule assembly. Depending upon the cell context, may act at the level of the Golgi apparatus or that of the centrosome. In complex with AKAP9, recruits CAMSAP2 to the Golgi apparatus and tethers non-centrosomal minus-end microtubules to the Golgi, an important step for polarized cell movement. In complex with AKAP9, EB1/MAPRE1 and CDK5RAP2, contributes to microtubules nucleation and extension from the centrosome to the cell periphery, a crucial process for directed cell migration, mitotic spindle orientation and cell-cycle progression. The sequence is that of Myomegalin (Pde4dip) from Mus musculus (Mouse).